The chain runs to 321 residues: Cytochrome c biogenesis protein CcsA (321 aa).

The next 8 helical transmembrane spans lie at 17 to 37 (VVSIVIIIHFLTLLVNEFVGL), 48 to 68 (TFFCLTGLLITRWIYSGHLPI), 71 to 91 (LYESLIFLSWIFSIIHMVPYF), 98 to 118 (LSTITAPSTFFTQGFATWGLL), 143 to 163 (MVSGYAALLCGSLLSAALLVI), 225 to 245 (ILSIGFLFLTIGILSGAVWAN), 259 to 273 (TWAFITWTIFAIYFH), and 286 to 306 (AIVASIGFLIIWICYFGVNLL).

It belongs to the CcmF/CycK/Ccl1/NrfE/CcsA family. May interact with Ccs1.

The protein resides in the plastid. Its subcellular location is the chloroplast thylakoid membrane. In terms of biological role, required during biogenesis of c-type cytochromes (cytochrome c6 and cytochrome f) at the step of heme attachment. In Populus trichocarpa (Western balsam poplar), this protein is Cytochrome c biogenesis protein CcsA.